A 390-amino-acid polypeptide reads, in one-letter code: Putative nickel insertion protein (390 aa).

The protein belongs to the LarC family.

In Geobacter metallireducens (strain ATCC 53774 / DSM 7210 / GS-15), this protein is Putative nickel insertion protein.